The sequence spans 252 residues: Hydroxyacylglutathione hydrolase (252 aa).

Residues histidine 54, histidine 56, aspartate 58, histidine 59, histidine 113, aspartate 132, and histidine 170 each contribute to the Zn(2+) site.

The protein belongs to the metallo-beta-lactamase superfamily. Glyoxalase II family. In terms of assembly, monomer. The cofactor is Zn(2+).

The enzyme catalyses an S-(2-hydroxyacyl)glutathione + H2O = a 2-hydroxy carboxylate + glutathione + H(+). The protein operates within secondary metabolite metabolism; methylglyoxal degradation; (R)-lactate from methylglyoxal: step 2/2. Its function is as follows. Thiolesterase that catalyzes the hydrolysis of S-D-lactoyl-glutathione to form glutathione and D-lactic acid. This chain is Hydroxyacylglutathione hydrolase, found in Thermosynechococcus vestitus (strain NIES-2133 / IAM M-273 / BP-1).